Consider the following 623-residue polypeptide: Scarecrow-like protein 22 (623 aa).

2 disordered regions span residues 62–90 (RSPS…AAAA) and 179–203 (PNPG…QPGS). Positions 63–80 (SPSPFVSSSTTTLSSSHG) are enriched in low complexity. Positions 235 to 622 (NDQDQSAVII…KELVTVSAWK (388 aa)) constitute a GRAS domain. Residues 242–311 (VIIDQLFSAA…ALHSLLQDSS (70 aa)) form a leucine repeat I (LRI) region. A VHIID region spans residues 330–398 (YRAFSETSPF…SSAPSLKITA (69 aa)). A VHIID motif is present at residues 361–365 (IHIVD). Residues 413 to 448 (FTEENLRSFAGETGVSFEIELLNMEILLNPTYWPLS) form a leucine repeat II (LRII) region. Residues 458 to 545 (IAVNLPISSM…RFCVQPSIQK (88 aa)) are PFYRE. The segment at 548 to 622 (TNRYRWMERS…KELVTVSAWK (75 aa)) is SAW.

This sequence belongs to the GRAS family. Expressed in seedlings, roots, leaves and flowers.

It is found in the nucleus. Probable transcription factor involved in plant development. The polypeptide is Scarecrow-like protein 22 (SCL22) (Arabidopsis thaliana (Mouse-ear cress)).